Reading from the N-terminus, the 163-residue chain is MFRTMLKSKIHRATVTQADLHYVGSVTVDADLMDAADLLEGEQVAIVDVTNGARLETYVITGERGSGVIGINGAAAHLIEPGDLVILISYGVMDELEARSVRPKVIFVDADNRIVERGQDPGHAPAGSGLAGTAASVTSAITEAAAETDDAAKLDALLQQPEH.

Catalysis depends on Ser25, which acts as the Schiff-base intermediate with substrate; via pyruvic acid. Ser25 carries the pyruvic acid (Ser) modification. Position 57 (Thr57) interacts with substrate. Tyr58 (proton donor) is an active-site residue. Residue 73-75 (GAA) participates in substrate binding.

This sequence belongs to the PanD family. Heterooctamer of four alpha and four beta subunits. Requires pyruvate as cofactor. Is synthesized initially as an inactive proenzyme, which is activated by self-cleavage at a specific serine bond to produce a beta-subunit with a hydroxyl group at its C-terminus and an alpha-subunit with a pyruvoyl group at its N-terminus.

The protein resides in the cytoplasm. It carries out the reaction L-aspartate + H(+) = beta-alanine + CO2. It functions in the pathway cofactor biosynthesis; (R)-pantothenate biosynthesis; beta-alanine from L-aspartate: step 1/1. Functionally, catalyzes the pyruvoyl-dependent decarboxylation of aspartate to produce beta-alanine. The protein is Aspartate 1-decarboxylase of Saccharopolyspora erythraea (strain ATCC 11635 / DSM 40517 / JCM 4748 / NBRC 13426 / NCIMB 8594 / NRRL 2338).